A 241-amino-acid polypeptide reads, in one-letter code: Carboxy-S-adenosyl-L-methionine synthase (241 aa).

S-adenosyl-L-methionine-binding positions include Tyr38, 63 to 65 (GCS), 88 to 89 (DN), 116 to 117 (DI), Asn131, and Arg198.

This sequence belongs to the class I-like SAM-binding methyltransferase superfamily. Cx-SAM synthase family. In terms of assembly, homodimer.

It catalyses the reaction prephenate + S-adenosyl-L-methionine = carboxy-S-adenosyl-L-methionine + 3-phenylpyruvate + H2O. In terms of biological role, catalyzes the conversion of S-adenosyl-L-methionine (SAM) to carboxy-S-adenosyl-L-methionine (Cx-SAM). This Haemophilus influenzae (strain ATCC 51907 / DSM 11121 / KW20 / Rd) protein is Carboxy-S-adenosyl-L-methionine synthase.